Consider the following 679-residue polypeptide: Protein hook (679 aa).

Positions 6-123 constitute a Calponin-homology (CH) domain; the sequence is NEMYYSLLEW…RLLQLVLGCA (118 aa). 2 coiled-coil regions span residues 135–437 and 480–574; these read EIMC…LKCG and QTAL…QEIL.

Belongs to the hook family. As to quaternary structure, homodimer. Interacts with microtubules via its N-terminus.

The protein resides in the cytoplasm. The protein localises to the cytoskeleton. Its subcellular location is the endosome. It localises to the synapse. Involved in endocytic trafficking by stabilizing organelles of the endocytic pathway. Probably acts as a cytoskeletal linker protein required to tether endosome vesicles to the cytoskeleton. Involved in modulation of endocytosis at stages required for down-regulation of membrane proteins that control synapse size. Not involved in synaptic vesicle recycling. Required in R7 cells for boss endocytosis into multivesicular bodies (MVBs). Has a role in regulating adult longevity. This Drosophila erecta (Fruit fly) protein is Protein hook.